The chain runs to 462 residues: ATP synthase subunit beta (462 aa).

151–158 (GGAGVGKT) provides a ligand contact to ATP.

Belongs to the ATPase alpha/beta chains family. F-type ATPases have 2 components, CF(1) - the catalytic core - and CF(0) - the membrane proton channel. CF(1) has five subunits: alpha(3), beta(3), gamma(1), delta(1), epsilon(1). CF(0) has four main subunits: a(1), b(1), b'(1) and c(9-12).

Its subcellular location is the cell inner membrane. It catalyses the reaction ATP + H2O + 4 H(+)(in) = ADP + phosphate + 5 H(+)(out). In terms of biological role, produces ATP from ADP in the presence of a proton gradient across the membrane. The catalytic sites are hosted primarily by the beta subunits. The polypeptide is ATP synthase subunit beta (Chlorobium chlorochromatii (strain CaD3)).